Reading from the N-terminus, the 803-residue chain is Carbon monoxide dehydrogenase large chain (803 aa).

At R384 the chain carries 4-hydroxyarginine. C385 is a binding site for Cu(+). E757 serves as a coordination point for Mo-molybdopterin cytosine dinucleotide.

Dimer of heterotrimers. Each heterotrimer consists of a large, a medium and a small subunit. Requires Cu(+) as cofactor. It depends on Mo-molybdopterin cytosine dinucleotide as a cofactor.

It carries out the reaction CO + a quinone + H2O = a quinol + CO2. Catalyzes the oxidation of carbon monoxide to carbon dioxide. This is Carbon monoxide dehydrogenase large chain (cutL) from Hydrogenophaga pseudoflava (Pseudomonas carboxydoflava).